Here is a 126-residue protein sequence, read N- to C-terminus: Aspartate 1-decarboxylase (126 aa).

Ser-25 serves as the catalytic Schiff-base intermediate with substrate; via pyruvic acid. Residue Ser-25 is modified to Pyruvic acid (Ser). Thr-57 contributes to the substrate binding site. The active-site Proton donor is Tyr-58. 73-75 (GAA) provides a ligand contact to substrate.

Belongs to the PanD family. In terms of assembly, heterooctamer of four alpha and four beta subunits. Pyruvate is required as a cofactor. In terms of processing, is synthesized initially as an inactive proenzyme, which is activated by self-cleavage at a specific serine bond to produce a beta-subunit with a hydroxyl group at its C-terminus and an alpha-subunit with a pyruvoyl group at its N-terminus.

Its subcellular location is the cytoplasm. The catalysed reaction is L-aspartate + H(+) = beta-alanine + CO2. It functions in the pathway cofactor biosynthesis; (R)-pantothenate biosynthesis; beta-alanine from L-aspartate: step 1/1. Its function is as follows. Catalyzes the pyruvoyl-dependent decarboxylation of aspartate to produce beta-alanine. The polypeptide is Aspartate 1-decarboxylase (Erwinia tasmaniensis (strain DSM 17950 / CFBP 7177 / CIP 109463 / NCPPB 4357 / Et1/99)).